A 954-amino-acid chain; its full sequence is Bifunctional glutamine synthetase adenylyltransferase/adenylyl-removing enzyme (954 aa).

The adenylyl removase stretch occupies residues 1-450; sequence MENISNKPLS…HFIETVGGRT (450 aa). Positions 454-954 are adenylyl transferase; that stretch reads GADLWTQQLW…MDIYQRILVD (501 aa).

The protein belongs to the GlnE family. Mg(2+) serves as cofactor.

It carries out the reaction [glutamine synthetase]-O(4)-(5'-adenylyl)-L-tyrosine + phosphate = [glutamine synthetase]-L-tyrosine + ADP. The enzyme catalyses [glutamine synthetase]-L-tyrosine + ATP = [glutamine synthetase]-O(4)-(5'-adenylyl)-L-tyrosine + diphosphate. Involved in the regulation of glutamine synthetase GlnA, a key enzyme in the process to assimilate ammonia. When cellular nitrogen levels are high, the C-terminal adenylyl transferase (AT) inactivates GlnA by covalent transfer of an adenylyl group from ATP to specific tyrosine residue of GlnA, thus reducing its activity. Conversely, when nitrogen levels are low, the N-terminal adenylyl removase (AR) activates GlnA by removing the adenylyl group by phosphorolysis, increasing its activity. The regulatory region of GlnE binds the signal transduction protein PII (GlnB) which indicates the nitrogen status of the cell. This is Bifunctional glutamine synthetase adenylyltransferase/adenylyl-removing enzyme from Shewanella woodyi (strain ATCC 51908 / MS32).